Here is a 189-residue protein sequence, read N- to C-terminus: GMP synthase [glutamine-hydrolyzing] subunit A (189 aa).

The Glutamine amidotransferase type-1 domain maps to 5 to 189; the sequence is KILVVNNYGQ…TNFFEVCDRY (185 aa). The active-site Nucleophile is C79. Active-site residues include H166 and E168.

In terms of assembly, heterodimer composed of a glutamine amidotransferase subunit (A) and a GMP-binding subunit (B).

The catalysed reaction is XMP + L-glutamine + ATP + H2O = GMP + L-glutamate + AMP + diphosphate + 2 H(+). Its pathway is purine metabolism; GMP biosynthesis; GMP from XMP (L-Gln route): step 1/1. Functionally, catalyzes the synthesis of GMP from XMP. This is GMP synthase [glutamine-hydrolyzing] subunit A from Methanosarcina acetivorans (strain ATCC 35395 / DSM 2834 / JCM 12185 / C2A).